The chain runs to 209 residues: Phosphoheptose isomerase (209 aa).

The 160-residue stretch at 50-209 (IADTFREGGK…ELVEKMMGYD (160 aa)) folds into the SIS domain. 65-67 (NGG) serves as a coordination point for substrate. Zn(2+)-binding residues include histidine 74 and glutamate 78. Residues glutamate 78, 109-110 (ND), 135-137 (STS), serine 140, and glutamine 188 contribute to the substrate site. Zn(2+) is bound by residues glutamine 188 and histidine 196.

The protein belongs to the SIS family. GmhA subfamily. The cofactor is Zn(2+).

The protein localises to the cytoplasm. The enzyme catalyses 2 D-sedoheptulose 7-phosphate = D-glycero-alpha-D-manno-heptose 7-phosphate + D-glycero-beta-D-manno-heptose 7-phosphate. Its pathway is carbohydrate biosynthesis; D-glycero-D-manno-heptose 7-phosphate biosynthesis; D-glycero-alpha-D-manno-heptose 7-phosphate and D-glycero-beta-D-manno-heptose 7-phosphate from sedoheptulose 7-phosphate: step 1/1. Catalyzes the isomerization of sedoheptulose 7-phosphate in D-glycero-D-manno-heptose 7-phosphate. The chain is Phosphoheptose isomerase from Chlorobaculum tepidum (strain ATCC 49652 / DSM 12025 / NBRC 103806 / TLS) (Chlorobium tepidum).